A 940-amino-acid polypeptide reads, in one-letter code: MQIKAQDTGQQKKSCLLSNIRNKWKNRNRGSFRQWVGKLSNGLMIPIAVLPIAGIFLGVGDAIAGNAGDLTGLRYFGLFIKNGGDVVFANLPILFAIAIAITFSQDAGVAGFSAFVFWAAMNGFMSSLILPFDKAGKIITDTSTPIAGFKVLYNKSVPVHAIATTLGLRTLSTSVFGGIIVGALTSVLYKKFYAIRLPDVIGFFSGTRFVPIICFVVAIPVALILLMIWPAVSIGLNAIGTGLGFLGGKGYGANSLIFGYIERSLIPFGVHHAFYAPLWYTSAGGSLQEIVNQQVWIRPDFHLSDNYVARVIGWVDPNNSSMYIIPGALNGQNGSSTGNTMSKDLNGALSAYMSKESTAFLTWKDLVDGLTFKGNFDKMAENGLLDGSNKIWLGLNGSGILGKKLLLSDGNVYTITFKTFANTTPIAWSKGAQAVLPLNASSTIVNNPTALAAATQSNNNTNNIKLYPVNSFRVAVESLNPAQYSQGKFPFMLFGIPAAGVAMILAAPKDRRKEAASIVGSAAFTSFLTGITEPFEFTFLFLAPWLFYGVHAVLAAVSFWLMNILGANVGQTFSGSFIDFILYGALPDGRRWLANSYLVPIIGLFLAAIYFPTFYFLIKHFNLATPGRGGKLITKKEYLASKAAAKAEGVSGVAENFTQTQIEAGILLQAYGGKENIVELGACITKLRVTVKNPELVKEEPIKELGAAGVMRTTPTFFVAVFGTRAAVYKSAMQDIIQGKVNWEALQKVINTDQLAVEPKETTPPKEVMPVVQDEIVILSPVNGTLKSLNQVPDETFKQKLVGEGVAIVPSDGHFKAPGEAGVKTELAFPGGHAYIFDIDGIKVMLHIGIDTVQINAKKQPGEPLEVFDIKTKQGEYTKEKSESVVEVDLKKLSKKYNPITPFVVMKESLENFKLVPIRQRGEIKVGQPIFKLVYKKSQA.

The region spanning 1–284 is the PTS EIIC type-1; first part domain; sequence MQIKAQDTGQ…YAPLWYTSAG (284 aa). The next 5 helical transmembrane spans lie at 43-63, 83-103, 112-132, 175-195, and 209-229; these read LMIPIAVLPIAGIFLGVGDAI, GGDVVFANLPILFAIAIAITF, FSAFVFWAAMNGFMSSLILPF, VFGGIIVGALTSVLYKKFYAI, and FVPIICFVVAIPVALILLMIW. The segment at 285–478 is unknown; the sequence is GSLQEIVNQQ…VNSFRVAVES (194 aa). Residues 479–630 form the PTS EIIC type-1; second part domain; it reads LNPAQYSQGK…FNLATPGRGG (152 aa). 5 helical membrane-spanning segments follow: residues 487-507, 515-535, 537-557, 564-584, and 598-618; these read GKFPFMLFGIPAAGVAMILAA, AASIVGSAAFTSFLTGITEPF, FTFLFLAPWLFYGVHAVLAAV, ILGANVGQTFSGSFIDFILYG, and LVPIIGLFLAAIYFPTFYFLI. The 83-residue stretch at 661–743 folds into the PTS EIIB type-1 domain; the sequence is QIEAGILLQA…QDIIQGKVNW (83 aa). The Phosphocysteine intermediate; for EIIB activity role is filled by Cys-683. The PTS EIIA type-1 domain maps to 794-907; the sequence is DETFKQKLVG…NPITPFVVMK (114 aa). The active-site Tele-phosphohistidine intermediate; for EIIA activity is the His-847.

It localises to the cell membrane. It carries out the reaction N(pros)-phospho-L-histidyl-[protein] + D-glucose(out) = D-glucose 6-phosphate(in) + L-histidyl-[protein]. The phosphoenolpyruvate-dependent sugar phosphotransferase system (sugar PTS), a major carbohydrate active transport system, catalyzes the phosphorylation of incoming sugar substrates concomitantly with their translocation across the cell membrane. This system is involved in glucose transport. This chain is PTS system glucose-specific EIICBA component (ptsG), found in Mycoplasma pneumoniae (strain ATCC 29342 / M129 / Subtype 1) (Mycoplasmoides pneumoniae).